A 428-amino-acid polypeptide reads, in one-letter code: 3-phosphoshikimate 1-carboxyvinyltransferase (428 aa).

3-phosphoshikimate contacts are provided by Lys-23, Ser-24, and Arg-28. Residue Lys-23 coordinates phosphoenolpyruvate. Phosphoenolpyruvate is bound by residues Gly-97 and Arg-125. 3-phosphoshikimate-binding residues include Ser-170, Ser-171, Gln-172, Ser-198, Asp-314, Asn-337, and Lys-341. Residue Gln-172 participates in phosphoenolpyruvate binding. Residue Asp-314 is the Proton acceptor of the active site. Residues Arg-345, Arg-387, and Lys-412 each contribute to the phosphoenolpyruvate site.

This sequence belongs to the EPSP synthase family. In terms of assembly, monomer.

The protein localises to the cytoplasm. The enzyme catalyses 3-phosphoshikimate + phosphoenolpyruvate = 5-O-(1-carboxyvinyl)-3-phosphoshikimate + phosphate. It participates in metabolic intermediate biosynthesis; chorismate biosynthesis; chorismate from D-erythrose 4-phosphate and phosphoenolpyruvate: step 6/7. In terms of biological role, catalyzes the transfer of the enolpyruvyl moiety of phosphoenolpyruvate (PEP) to the 5-hydroxyl of shikimate-3-phosphate (S3P) to produce enolpyruvyl shikimate-3-phosphate and inorganic phosphate. In Yersinia pestis bv. Antiqua (strain Antiqua), this protein is 3-phosphoshikimate 1-carboxyvinyltransferase.